The following is a 280-amino-acid chain: Lacto-N-neotetraose biosynthesis glycosyltransferase LgtE (280 aa).

It belongs to the glycosyltransferase 25 family.

It participates in glycan metabolism; lacto-N-neotetraose biosynthesis. It functions in the pathway bacterial outer membrane biogenesis; lipooligosaccharide biosynthesis. Adds the first galactose to the lacto-N-tetraose chain in lipooligosaccharide (LOS). This is Lacto-N-neotetraose biosynthesis glycosyltransferase LgtE (lgtE) from Neisseria gonorrhoeae.